The primary structure comprises 445 residues: Glutamate--tRNA ligase 1 (445 aa).

The 'HIGH' region motif lies at 8 to 18 (PSPTGKLHVGN). A 'KMSKS' region motif is present at residues 239 to 243 (KLSKR). K242 lines the ATP pocket.

It belongs to the class-I aminoacyl-tRNA synthetase family. Glutamate--tRNA ligase type 1 subfamily. In terms of assembly, monomer.

It is found in the cytoplasm. The catalysed reaction is tRNA(Glu) + L-glutamate + ATP = L-glutamyl-tRNA(Glu) + AMP + diphosphate. In terms of biological role, catalyzes the attachment of glutamate to tRNA(Glu) in a two-step reaction: glutamate is first activated by ATP to form Glu-AMP and then transferred to the acceptor end of tRNA(Glu). The chain is Glutamate--tRNA ligase 1 from Maricaulis maris (strain MCS10) (Caulobacter maris).